A 333-amino-acid polypeptide reads, in one-letter code: DNA-3-methyladenine glycosylase (333 aa).

Residues 1–14 show a composition bias toward low complexity; it reads MPARGGSARPGRGA. Residues 1 to 42 are disordered; it reads MPARGGSARPGRGALKPVSVTLLPDTEQPPFLGRARRPGNAR. A phosphoserine mark is found at Ser-98 and Ser-272.

This sequence belongs to the DNA glycosylase MPG family. As to quaternary structure, binds MBD1. Binds SSBP1.

The protein localises to the cytoplasm. It localises to the mitochondrion matrix. The protein resides in the mitochondrion nucleoid. It is found in the nucleus. The catalysed reaction is Hydrolysis of alkylated DNA, releasing 3-methyladenine, 3-methylguanine, 7-methylguanine and 7-methyladenine.. Its activity is regulated as follows. Binding to SSBP1 in mitochondria inhibits glycosylase activity in the context of a single-stranded DNA (ssDNA), but not a double-stranded DNA (dsDNA) substrates. Its function is as follows. Hydrolysis of the deoxyribose N-glycosidic bond to excise 3-methyladenine, and 7-methylguanine from the damaged DNA polymer formed by alkylation lesions. The protein is DNA-3-methyladenine glycosylase (Mpg) of Mus musculus (Mouse).